Reading from the N-terminus, the 361-residue chain is UDP-3-O-acylglucosamine N-acyltransferase (361 aa).

Catalysis depends on His253, which acts as the Proton acceptor.

This sequence belongs to the transferase hexapeptide repeat family. LpxD subfamily. In terms of assembly, homotrimer.

It catalyses the reaction a UDP-3-O-[(3R)-3-hydroxyacyl]-alpha-D-glucosamine + a (3R)-hydroxyacyl-[ACP] = a UDP-2-N,3-O-bis[(3R)-3-hydroxyacyl]-alpha-D-glucosamine + holo-[ACP] + H(+). It participates in bacterial outer membrane biogenesis; LPS lipid A biosynthesis. Its function is as follows. Catalyzes the N-acylation of UDP-3-O-acylglucosamine using 3-hydroxyacyl-ACP as the acyl donor. Is involved in the biosynthesis of lipid A, a phosphorylated glycolipid that anchors the lipopolysaccharide to the outer membrane of the cell. The protein is UDP-3-O-acylglucosamine N-acyltransferase of Burkholderia pseudomallei (strain 668).